We begin with the raw amino-acid sequence, 326 residues long: Malate dehydrogenase (326 aa).

11–17 serves as a coordination point for NAD(+); that stretch reads GAAGQIG. Substrate contacts are provided by Arg92 and Arg98. NAD(+) is bound by residues Asn105, Gln112, and 129-131; that span reads VGN. 2 residues coordinate substrate: Asn131 and Arg162. The active-site Proton acceptor is His187.

Belongs to the LDH/MDH superfamily. MDH type 2 family.

The catalysed reaction is (S)-malate + NAD(+) = oxaloacetate + NADH + H(+). Catalyzes the reversible oxidation of malate to oxaloacetate. This chain is Malate dehydrogenase, found in Leptospira borgpetersenii serovar Hardjo-bovis (strain JB197).